The chain runs to 409 residues: Probable sodium/metabolite cotransporter BASS6, chloroplastic (409 aa).

Residues 1-49 (MSVITTPIETLHLKSTLRLLPRAVYRSQRIQVFPPNIFSNTSLSSPLRI) constitute a chloroplast transit peptide. Transmembrane regions (helical) follow at residues 100 to 120 (ILPHVVLASTILALIYPPSFT), 121 to 141 (WFTSRYFVPALGFLMFAVGIN), 170 to 190 (VLGFIFGLAAVSLFQLPTPIG), 191 to 211 (AGIMLVSCVSGAQLSNYATFL), 221 to 241 (IVMTSLSTATAVLVTPMLSLL), 253 to 273 (GMISSILQVVIAPIAAGLLLN), 285 to 305 (PFLPILSVLDTACCVGAPLAL), 316 to 336 (ATILLLVTMFHLSAFLAGYFL), and 381 to 401 (IPPAISTVVMSLMGFTLVLIW).

The protein belongs to the bile acid:sodium symporter (BASS) (TC 2.A.28) family.

The protein resides in the membrane. It localises to the plastid. Its subcellular location is the chloroplast envelope. Functionally, may function as sodium-coupled metabolite transporter across the chloroplast envelope. The protein is Probable sodium/metabolite cotransporter BASS6, chloroplastic (BASS6) of Arabidopsis thaliana (Mouse-ear cress).